Reading from the N-terminus, the 157-residue chain is Transcription elongation factor GreA (157 aa).

Residues 47-75 (SGEYEDAKKAQALLEGRIRELKHLLSRAE) adopt a coiled-coil conformation.

The protein belongs to the GreA/GreB family.

Necessary for efficient RNA polymerase transcription elongation past template-encoded arresting sites. The arresting sites in DNA have the property of trapping a certain fraction of elongating RNA polymerases that pass through, resulting in locked ternary complexes. Cleavage of the nascent transcript by cleavage factors such as GreA or GreB allows the resumption of elongation from the new 3'terminus. GreA releases sequences of 2 to 3 nucleotides. The protein is Transcription elongation factor GreA of Chloroflexus aggregans (strain MD-66 / DSM 9485).